Here is a 168-residue protein sequence, read N- to C-terminus: UPF0478 protein SH1183 (168 aa).

The chain crosses the membrane as a helical span at residues 7-27 (IAGIIAAIAFLVLCIGIVVVL). The segment at 144–168 (YRNTSVGNDANHSNENYTTNVEKNF) is disordered.

Belongs to the UPF0478 family.

It localises to the cell membrane. The sequence is that of UPF0478 protein SH1183 from Staphylococcus haemolyticus (strain JCSC1435).